Consider the following 39-residue polypeptide: Sarcotoxin-1C (39 aa).

Position 39 is an arginine amide (Arg-39).

The protein belongs to the cecropin family.

Its subcellular location is the secreted. Sarcotoxins, which are potent bactericidal proteins, are produced in response to injury. They are cytotoxic to both Gram-positive and Gram-negative bacteria. In Sarcophaga peregrina (Flesh fly), this protein is Sarcotoxin-1C.